A 640-amino-acid chain; its full sequence is Protection of telomeres protein 1 (640 aa).

It belongs to the telombin family. In terms of assembly, homodimer or homooligomer. Component of the shelterin complex (telosome) composed of TERF1, TERF2, TINF2, TERF2IP, ACD and POT1. Binds single-stranded telomeric DNA as a monomer. Associated component of the telomerase holoenzyme complex. Found in a complex with TERF1, TINF2 and TNKS1. Interacts with TNKS1. Forms heterodimers with ACD. Identified in a complex with ACD and single-stranded telomeric DNA.

Its subcellular location is the nucleus. It localises to the chromosome. The protein resides in the telomere. Component of the telomerase ribonucleoprotein (RNP) complex that is essential for the replication of chromosome termini. Is a component of the double-stranded telomeric DNA-binding TRF1 complex which is involved in the regulation of telomere length by cis-inhibition of telomerase. Also acts as a single-stranded telomeric DNA-binding protein and thus may act as a downstream effector of the TRF1 complex and may transduce information about telomere maintenance and/or length to the telomere terminus. Component of the shelterin complex (telosome) that is involved in the regulation of telomere length and protection. Shelterin associates with arrays of double-stranded TTAGGG repeats added by telomerase and protects chromosome ends; without its protective activity, telomeres are no longer hidden from the DNA damage surveillance and chromosome ends are inappropriately processed by DNA repair pathways. Binds to two or more telomeric single-stranded 5'-TTAGGG-3' repeats (G-strand) and with high specificity to a minimal telomeric single-stranded 5'-TAGGGTTAG-3' sequence. Binds telomeric single-stranded sequences internally or at proximity of a 3'-end. Its activity is TERT dependent but it does not increase TERT activity. The chain is Protection of telomeres protein 1 (Pot1) from Mus musculus (Mouse).